The sequence spans 461 residues: A-type ATP synthase subunit B (461 aa).

This sequence belongs to the ATPase alpha/beta chains family. Has multiple subunits with at least A(3), B(3), C, D, E, F, H, I and proteolipid K(x).

It is found in the cell membrane. Functionally, component of the A-type ATP synthase that produces ATP from ADP in the presence of a proton gradient across the membrane. The B chain is a regulatory subunit. This is A-type ATP synthase subunit B from Nitrosopumilus maritimus (strain SCM1).